Reading from the N-terminus, the 482-residue chain is tRNA sulfurtransferase (482 aa).

The 105-residue stretch at 61–165 folds into the THUMP domain; that stretch reads LAIRDALTRI…DDRLLLIKGR (105 aa). ATP contacts are provided by residues 183–184, Lys-265, Gly-287, and Gln-296; that span reads LI. An intrachain disulfide couples Cys-344 to Cys-456. The 79-residue stretch at 404 to 482 folds into the Rhodanese domain; sequence FGPNDVILDI…GFNNVKVYRP (79 aa). Residue Cys-456 is the Cysteine persulfide intermediate of the active site.

It belongs to the ThiI family.

It localises to the cytoplasm. The catalysed reaction is [ThiI sulfur-carrier protein]-S-sulfanyl-L-cysteine + a uridine in tRNA + 2 reduced [2Fe-2S]-[ferredoxin] + ATP + H(+) = [ThiI sulfur-carrier protein]-L-cysteine + a 4-thiouridine in tRNA + 2 oxidized [2Fe-2S]-[ferredoxin] + AMP + diphosphate. It carries out the reaction [ThiS sulfur-carrier protein]-C-terminal Gly-Gly-AMP + S-sulfanyl-L-cysteinyl-[cysteine desulfurase] + AH2 = [ThiS sulfur-carrier protein]-C-terminal-Gly-aminoethanethioate + L-cysteinyl-[cysteine desulfurase] + A + AMP + 2 H(+). Its pathway is cofactor biosynthesis; thiamine diphosphate biosynthesis. Its function is as follows. Catalyzes the ATP-dependent transfer of a sulfur to tRNA to produce 4-thiouridine in position 8 of tRNAs, which functions as a near-UV photosensor. Also catalyzes the transfer of sulfur to the sulfur carrier protein ThiS, forming ThiS-thiocarboxylate. This is a step in the synthesis of thiazole, in the thiamine biosynthesis pathway. The sulfur is donated as persulfide by IscS. The protein is tRNA sulfurtransferase of Escherichia coli O127:H6 (strain E2348/69 / EPEC).